Consider the following 1210-residue polypeptide: AF4/FMR2 family member 1 (1210 aa).

Disordered regions lie at residues Met-1 to Tyr-45, Thr-73 to Pro-314, Ser-366 to Val-957, and Thr-1098 to Ser-1119. 2 stretches are compositionally biased toward basic and acidic residues: residues Asn-9 to Pro-35 and His-78 to Leu-87. A phosphoserine mark is found at Ser-199, Ser-206, and Ser-212. Positions His-215–Lys-238 are enriched in polar residues. At Thr-220 the chain carries Phosphothreonine. Residues Ser-245–Pro-259 are compositionally biased toward basic and acidic residues. The span at Ala-267–Leu-279 shows a compositional bias: pro residues. A compositionally biased stretch (polar residues) spans His-394–Thr-419. Acidic residues predominate over residues Leu-423–Gln-439. The segment covering Glu-442 to Ala-453 has biased composition (pro residues). Low complexity predominate over residues Pro-454–Glu-472. The segment covering Ser-473 to Pro-497 has biased composition (acidic residues). Positions Glu-536 to Gly-546 are enriched in basic and acidic residues. Over residues Gln-586–Thr-602 the composition is skewed to polar residues. Ser-588 carries the phosphoserine modification. Position 681 is an N6-acetyllysine (Lys-681). Basic and acidic residues predominate over residues Pro-688–Glu-699. Phosphothreonine is present on Thr-697. The span at Thr-707–Cys-724 shows a compositional bias: polar residues. The span at Glu-732 to Lys-747 shows a compositional bias: basic and acidic residues. At Ser-750 the chain carries Phosphoserine. Phosphothreonine is present on Thr-755. Residues Gly-816–Lys-834 are compositionally biased toward basic and acidic residues. Residues Ser-871–Pro-880 are compositionally biased toward low complexity. A compositionally biased stretch (basic and acidic residues) spans Asn-906–Ser-932. A compositionally biased stretch (low complexity) spans Pro-1110–Ser-1119.

It belongs to the AF4 family. In terms of assembly, component of the super elongation complex (SEC), at least composed of EAF1, EAF2, CDK9, MLLT3/AF9, AFF (AFF1 or AFF4), the P-TEFb complex and ELL (ELL, ELL2 or ELL3).

The protein resides in the nucleus. In Homo sapiens (Human), this protein is AF4/FMR2 family member 1 (AFF1).